The following is a 428-amino-acid chain: UPF0761 membrane protein Ppha_1623 (428 aa).

The next 6 helical transmembrane spans lie at 52 to 72, 108 to 128, 148 to 168, 189 to 209, 216 to 233, and 252 to 272; these read LLSI…FVVF, SVPI…ISTV, FTLY…SLAA, LLSF…YMLV, FVHA…FELS, and GALS…IVVL.

It belongs to the UPF0761 family.

It localises to the cell inner membrane. The chain is UPF0761 membrane protein Ppha_1623 from Pelodictyon phaeoclathratiforme (strain DSM 5477 / BU-1).